The following is a 199-amino-acid chain: Early activation antigen CD69 (199 aa).

Over residues Met1–Ser14 the composition is skewed to polar residues. Residues Met1–Gln20 form a disordered region. The Cytoplasmic segment spans residues Met1–Ser40. A helical; Signal-anchor for type II membrane protein transmembrane segment spans residues Ile41–Leu61. Residues Asn62–Arg199 are Extracellular-facing. Intrachain disulfides connect Cys85–Cys96, Cys113–Cys194, and Cys173–Cys186. A C-type lectin domain is found at Tyr92–Ser195. Residues Asn150, Asn166, and Asn180 are each glycosylated (N-linked (GlcNAc...) asparagine).

In terms of assembly, homodimer; disulfide-linked. Interacts with S100A8 and S100A9. Interacts with galactin-1/LGALS1. Interacts with S1PR1; this interaction mediates S1PR1 degradation. Interacts with JAK3 and STAT5. Constitutive Ser/Thr phosphorylation in both mature thymocytes and activated T-lymphocytes. As to expression, expressed on the surface of activated T-cells, B-cells, natural killer cells, neutrophils and platelets. Present also in eosinophils.

It localises to the cell membrane. Functionally, transmembrane protein expressed mainly on T-cells resident in mucosa that plays an essential role in immune cell homeostasis. Rapidly expressed on the surface of platelets, T-lymphocytes and NK cells upon activation by various stimuli, such as antigen recognition or cytokine signaling, stimulates different signaling pathways in different cell types. Negatively regulates Th17 cell differentiation through its carbohydrate dependent interaction with galectin-1/LGALS1 present on immature dendritic cells. Association of CD69 cytoplasmic tail with the JAK3/STAT5 signaling pathway regulates the transcription of RORgamma/RORC and, consequently, differentiation toward the Th17 lineage. Also acts via the S100A8/S100A9 complex present on peripheral blood mononuclear cells to promote the conversion of naive CD4 T-cells into regulatory T-cells. Acts as an oxidized low-density lipoprotein (oxLDL) receptor in CD4 T-lymphocytes and negatively regulates the inflammatory response by inducing the expression of PDCD1 through the activation of NFAT. Participates in adipose tissue-derived mesenchymal stem cells (ASCs)-mediated protection against P.aeruginosa infection. Mechanistically, specifically recognizes P.aeruginosa to promote ERK1 activation, followed by granulocyte-macrophage colony-stimulating factor (GM-CSF) and other inflammatory cytokines secretion. In eosinophils, induces IL-10 production through the ERK1/2 pathway. Negatively regulates the chemotactic responses of effector lymphocytes and dendritic cells (DCs) to sphingosine 1 phosphate/S1P by acting as a S1PR1 receptor agonist and facilitating the internalization and degradation of the receptor. This is Early activation antigen CD69 (Cd69) from Mus musculus (Mouse).